Here is a 538-residue protein sequence, read N- to C-terminus: MAKDQLQVLNALDVAKTQLYHFTAIVIAGMGFFTDAYDLFCISLVTKLLGRIYYFHEGAPKPGILPSGISAAVNGVAFIGTLSGQLFFGWLGDKLGRKKVYGMTLMLMVICSIACGLSFGKTANGVIATLCFFRFWLGFGIGGDYPLSATIMSEYANKKTRGAFIAAVFAMQGFGILAGGIVALIVSAGFKNAYPAPTYSAHGKDSTPPEADYVWRIIVMIGALPALLTYYWRMKMPETARYTALVAKNTVKAAADMSKVLNVEIEEDKATVEKIEENGNSFGLFSKEFLRRHGLHLLGTTSTWFLLDIAFYSQNLFQKDIFSKIGWIPPPETMNALDEVFRIARAQTLIALCSTVPGYWFTVAFIDKMGRFAIQLMGSFFMTVFMFALAIPYDHWTKKENRIGFVIMYSLTFFFANFGPNATTFVVPAEIFPARLRSTCHGISAAAGKAGAIVGAFGFLYAAQSTDPKKVDAGYPTGIGVKNALIVLGCVNFLGMLSTLLVPESKGKSLEEMSKENEGEEENYGTETKGENAQTVPV.

Topologically, residues 1–24 (MAKDQLQVLNALDVAKTQLYHFTA) are cytoplasmic. Residues 25–45 (IVIAGMGFFTDAYDLFCISLV) form a helical membrane-spanning segment. The Extracellular segment spans residues 46–70 (TKLLGRIYYFHEGAPKPGILPSGIS). Residues 71–91 (AAVNGVAFIGTLSGQLFFGWL) form a helical membrane-spanning segment. The Cytoplasmic segment spans residues 92–99 (GDKLGRKK). Residues 100–120 (VYGMTLMLMVICSIACGLSFG) form a helical membrane-spanning segment. At 121 to 122 (KT) the chain is on the extracellular side. The chain crosses the membrane as a helical span at residues 123–143 (ANGVIATLCFFRFWLGFGIGG). Residues 144-164 (DYPLSATIMSEYANKKTRGAF) lie on the Cytoplasmic side of the membrane. The chain crosses the membrane as a helical span at residues 165–185 (IAAVFAMQGFGILAGGIVALI). Residues 186–211 (VSAGFKNAYPAPTYSAHGKDSTPPEA) are Extracellular-facing. Residues 212–232 (DYVWRIIVMIGALPALLTYYW) form a helical membrane-spanning segment. Over 233–292 (RMKMPETARYTALVAKNTVKAAADMSKVLNVEIEEDKATVEKIEENGNSFGLFSKEFLRR) the chain is Cytoplasmic. Residues 293 to 313 (HGLHLLGTTSTWFLLDIAFYS) form a helical membrane-spanning segment. Topologically, residues 314 to 345 (QNLFQKDIFSKIGWIPPPETMNALDEVFRIAR) are extracellular. A helical transmembrane segment spans residues 346–366 (AQTLIALCSTVPGYWFTVAFI). Residues 367–371 (DKMGR) are Cytoplasmic-facing. A helical transmembrane segment spans residues 372–392 (FAIQLMGSFFMTVFMFALAIP). Topologically, residues 393-402 (YDHWTKKENR) are extracellular. The helical transmembrane segment at 403 to 423 (IGFVIMYSLTFFFANFGPNAT) threads the bilayer. Residues 424-442 (TFVVPAEIFPARLRSTCHG) lie on the Cytoplasmic side of the membrane. The helical transmembrane segment at 443–463 (ISAAAGKAGAIVGAFGFLYAA) threads the bilayer. Residues 464 to 483 (QSTDPKKVDAGYPTGIGVKN) lie on the Extracellular side of the membrane. The helical transmembrane segment at 484–504 (ALIVLGCVNFLGMLSTLLVPE) threads the bilayer. Residues 505 to 538 (SKGKSLEEMSKENEGEEENYGTETKGENAQTVPV) lie on the Cytoplasmic side of the membrane. Basic and acidic residues predominate over residues 506-517 (KGKSLEEMSKEN). The segment at 506–538 (KGKSLEEMSKENEGEEENYGTETKGENAQTVPV) is disordered.

Belongs to the major facilitator superfamily. Phosphate:H(+) symporter (TC 2.A.1.9) family. As to expression, expressed at low levels in non-mycorrhized roots.

The protein resides in the cell membrane. It catalyses the reaction phosphate(in) + H(+)(in) = phosphate(out) + H(+)(out). Its function is as follows. Low-affinity transporter for external inorganic phosphate (Pi) probably involved in the acquisition of phosphate released by arbuscular mycorrhizal (AM) fungi during AM symbiosis. This chain is Low affinity inorganic phosphate transporter 3, found in Petunia hybrida (Petunia).